A 61-amino-acid polypeptide reads, in one-letter code: Large ribosomal subunit protein uL30 (61 aa).

It belongs to the universal ribosomal protein uL30 family. In terms of assembly, part of the 50S ribosomal subunit.

This Chlorobium phaeobacteroides (strain BS1) protein is Large ribosomal subunit protein uL30.